Consider the following 142-residue polypeptide: Putative pre-16S rRNA nuclease (142 aa).

Belongs to the YqgF nuclease family.

The protein localises to the cytoplasm. Its function is as follows. Could be a nuclease involved in processing of the 5'-end of pre-16S rRNA. The protein is Putative pre-16S rRNA nuclease of Photobacterium profundum (strain SS9).